Consider the following 86-residue polypeptide: Small ribosomal subunit protein bS20 (86 aa).

The protein belongs to the bacterial ribosomal protein bS20 family.

Binds directly to 16S ribosomal RNA. In Rhodococcus jostii (strain RHA1), this protein is Small ribosomal subunit protein bS20.